The sequence spans 293 residues: Small ribosomal subunit biogenesis GTPase RsgA (293 aa).

In terms of domain architecture, CP-type G spans 63–223 (KNELVRPPIA…VADTPGFSSL (161 aa)). GTP contacts are provided by residues 112–115 (SKMD) and 166–174 (GQSGVGKSS). Zn(2+) contacts are provided by Cys247, Cys252, His254, and Cys260.

The protein belongs to the TRAFAC class YlqF/YawG GTPase family. RsgA subfamily. Monomer. Associates with 30S ribosomal subunit, binds 16S rRNA. The cofactor is Zn(2+).

The protein localises to the cytoplasm. In terms of biological role, one of several proteins that assist in the late maturation steps of the functional core of the 30S ribosomal subunit. Helps release RbfA from mature subunits. May play a role in the assembly of ribosomal proteins into the subunit. Circularly permuted GTPase that catalyzes slow GTP hydrolysis, GTPase activity is stimulated by the 30S ribosomal subunit. The chain is Small ribosomal subunit biogenesis GTPase RsgA from Bacillus anthracis.